The sequence spans 1259 residues: MRGNNLRGGVGEYKINDVLGTRFQNFMDLVDQQKLTPFLVRNLDASLASATGSPYGLDDLHPDFAEYVMAVSAALRQIESPELTKVQVTGKYGNALESIVNDLFSGTTSGLIAQPTQPFGFNQLPFHNNHPNIKHLIPGFHLFPYTSAVYPTVNQNNNALINAILYLYHYISLLDLDSGVDARNIVSFLKKDNLVFNRYVNDIVTTMTNNNFFSQSLGFPTGQPTDEIVRDSVLQGLTGVAYQIVNRLRNVQASNQTFANLGAVAGQDISAKDAFAKFVSSVATPGYPGVNADKLFDAFSKITGGFYDQGPDVVNIADVDNDQAKQYRTNGLLNPVYILSPSIAKTVNADDYDKLNQAGGKRNSSMNNSTQNNNSSRSNNSARNNNSVWNNNNSAWKNNNSAWNDNSSWKNNNRFGQAGGITFGDIGAAPAGSVLSLPFLYGPALPDGSHKLITEDEQGDQNDAKLVDIDSVKEIEDLTDPNNITGIIPEIVDIGNDPNYNYARAQLVTLLYQLIVNEATFDQASGLPNLDNEIRNAAQNYNKIVVRLRAIPTSNFGSSMADLRDSFLSEFVNTSYRQFQVEKQTGNLITGQQTIANKGSNFANPDIKSFYDNTLVNNADFYKTYFNLVKLGPNGVVVDADVKDITEAKGKSDAELQNYRLNVRKNTGYTRFTGAQVGGLLGDIVFIDRIPAFPQDGSIRNVWLTRAIALTPVTLNAYNVEALRRIAREVYNSPVGQSTVPVYGQPVDLTLIAQSAARMNFPISNVAFRDTFNNLLQNALNQAATGTAVTPGFIEQEDKLVEHLLRVSSRWERDGNTFIFKDLSGNPVQTDPADNCLLIDTSTRECLSVLTQCIADPGTKLSDTCARLMEFNFKVNPPLNLLKDEISKMNPGVAFEILRKFGFGSYLAEDKDDSGSVIRRYKVQSVGSWIRELMGESARCAPGQAPVVNQGPCRTISLREELGQANADKILNMAKDSAPFLRYLEVLVHWVNANPQVLNPEETKDQSTLCPTSYPKVNDSFNTYSYLNPYKDVVYRLRNTTCDLERLKCSIMGNYLGSGSRKIFTDLATIPHDTNMPFTRIGFTSTVPLLNKVPMFGGDGGIYNLQNQLNNLNNPVGYNMFHQIYKDLLNTMGNIGDSRCIRLSSNTQARCEDKLESFKNAEIELNKCLNRLIERNKIYQATRGRIDLNRVPPENVAAVLEKHSNLLNMNSAYNKKAVNLIDIFQTIAKAIINKVEEGAPKQTVERPLTMGFHNPSYNF.

The interval Lys-354–Lys-410 is disordered. The span at Arg-362 to Lys-410 shows a compositional bias: low complexity.

Its subcellular location is the virion. This is an uncharacterized protein from Acanthamoeba polyphaga (Amoeba).